The sequence spans 489 residues: Betaine aldehyde dehydrogenase (489 aa).

Residues threonine 26 and aspartate 93 each coordinate K(+). 150 to 152 provides a ligand contact to NAD(+); that stretch reads GAW. The Charge relay system role is filled by lysine 162. 176-179 serves as a coordination point for NAD(+); sequence KPSE. A K(+)-binding site is contributed by valine 180. 229–232 contributes to the NAD(+) binding site; it reads GVET. Leucine 245 is a K(+) binding site. The active-site Proton acceptor is glutamate 251. Glycine 253, cysteine 285, and glutamate 386 together coordinate NAD(+). Catalysis depends on cysteine 285, which acts as the Nucleophile. Cysteine 285 carries the cysteine sulfenic acid (-SOH) modification. Residues lysine 456 and glycine 459 each contribute to the K(+) site. Catalysis depends on glutamate 463, which acts as the Charge relay system.

This sequence belongs to the aldehyde dehydrogenase family. In terms of assembly, dimer of dimers. K(+) is required as a cofactor.

The enzyme catalyses betaine aldehyde + NAD(+) + H2O = glycine betaine + NADH + 2 H(+). Its pathway is amine and polyamine biosynthesis; betaine biosynthesis via choline pathway; betaine from betaine aldehyde: step 1/1. Functionally, involved in the biosynthesis of the osmoprotectant glycine betaine. Catalyzes the irreversible oxidation of betaine aldehyde to the corresponding acid. The sequence is that of Betaine aldehyde dehydrogenase from Burkholderia ambifaria (strain MC40-6).